We begin with the raw amino-acid sequence, 409 residues long: Z-DNA-binding protein 1 (409 aa).

2 consecutive Z-binding domains span residues 8–70 (LGTG…SLGG) and 85–147 (SAAQ…TIYR). Residues Lys-17 and Lys-43 each participate in a glycyl lysine isopeptide (Lys-Gly) (interchain with G-Cter in ubiquitin) cross-link. Positions 59-87 (SSPAPATWSLGGDGASGDGAPEIPEDSAA) are disordered. Short sequence motifs (RIP homotypic interaction motif (RHIM)) lie at residues 183–207 (NSLI…RQTI) and 241–265 (LIHL…LERD). Disordered stretches follow at residues 269–307 (HPIF…GGTT) and 323–369 (GNNN…TPSD). The segment covering 270 to 290 (PIFSFSSSPPESTTTADPETA) has biased composition (low complexity). Positions 337–351 (GTKESADSQELKEDT) are enriched in basic and acidic residues.

As to quaternary structure, homodimer. Interacts (via RIP homotypic interaction motif) with RIPK3; leading to RIPK3 activation and necroptosis; interaction is enhanced by CASP6. Interacts (via RIP homotypic interaction motif) with RIPK1. Component of the AIM2 PANoptosome complex, a multiprotein complex that drives inflammatory cell death (PANoptosis). Ubiquitinated; polyubiquitinated following influenza A virus (IAV) infection. In terms of processing, phosphorylated.

It localises to the cytoplasm. It is found in the nucleus. With respect to regulation, ZBP1-dependent necroptosis is normally inhibited by RIPK1: RIPK1 inhibits the ZBP1-induced activation of RIPK3 via FADD-mediated recruitment of CASP8, which cleaves RIPK1 and limits TNF-induced necroptosis. Functionally, key innate sensor that recognizes and binds Z-RNA structures, which are produced by a number of viruses, such as herpesvirus, orthomyxovirus or flavivirus, and triggers different forms of cell death. ZBP1 acts as an essential mediator of pyroptosis, necroptosis and apoptosis (PANoptosis), an integral part of host defense against pathogens, by activating RIPK3, caspase-8 (CASP8), and the NLRP3 inflammasome. Key activator of necroptosis, a programmed cell death process in response to death-inducing TNF-alpha family members, via its ability to bind Z-RNA: once activated upon Z-RNA-binding, ZBP1 interacts and stimulates RIPK3 kinase, which phosphorylates and activates MLKL, triggering execution of programmed necrosis. In addition to TNF-induced necroptosis, necroptosis can also take place in the nucleus in response to orthomyxoviruses infection: ZBP1 recognizes and binds Z-RNA structures that are produced in infected nuclei by orthomyxoviruses, such as the influenza A virus (IAV), leading to ZBP1 activation, RIPK3 stimulation and subsequent MLKL phosphorylation, triggering disruption of the nuclear envelope and leakage of cellular DNA into the cytosol. ZBP1-dependent cell death in response to IAV infection promotes interleukin-1 alpha (IL1A) induction in an NLRP3-inflammasome-independent manner: IL1A expression is required for the optimal interleukin-1 beta (IL1B) production, and together, these cytokines promote infiltration of inflammatory neutrophils to the lung, leading to the formation of neutrophil extracellular traps. In addition to its direct role in driving necroptosis via its ability to sense Z-RNAs, also involved in PANoptosis triggered in response to bacterial infection: component of the AIM2 PANoptosome complex, a multiprotein complex that triggers PANoptosis. Also acts as the apical sensor of fungal infection responsible for activating PANoptosis. Involved in CASP8-mediated cell death via its interaction with RIPK1 but independently of its ability to sense Z-RNAs. In some cell types, also able to restrict viral replication by promoting cell death-independent responses. In response to flavivirus infection in neurons, promotes a cell death-independent pathway that restricts viral replication: together with RIPK3, promotes a death-independent transcriptional program that modifies the cellular metabolism via up-regulation expression of the enzyme ACOD1/IRG1 and production of the metabolite itaconate. Itaconate inhibits the activity of succinate dehydrogenase, generating a metabolic state in neurons that suppresses replication of viral genomes. The sequence is that of Z-DNA-binding protein 1 from Rattus norvegicus (Rat).